We begin with the raw amino-acid sequence, 417 residues long: Histidine--tRNA ligase (417 aa).

It belongs to the class-II aminoacyl-tRNA synthetase family. In terms of assembly, homodimer.

It is found in the cytoplasm. It catalyses the reaction tRNA(His) + L-histidine + ATP = L-histidyl-tRNA(His) + AMP + diphosphate + H(+). This Nitratidesulfovibrio vulgaris (strain ATCC 29579 / DSM 644 / CCUG 34227 / NCIMB 8303 / VKM B-1760 / Hildenborough) (Desulfovibrio vulgaris) protein is Histidine--tRNA ligase.